We begin with the raw amino-acid sequence, 218 residues long: UPF0598 protein C8orf82 homolog (218 aa).

The protein belongs to the UPF0598 family.

In Mus musculus (Mouse), this protein is UPF0598 protein C8orf82 homolog.